The sequence spans 149 residues: Arginine repressor (149 aa).

Belongs to the ArgR family.

The protein localises to the cytoplasm. The protein operates within amino-acid biosynthesis; L-arginine biosynthesis [regulation]. In terms of biological role, regulates arginine biosynthesis genes. The sequence is that of Arginine repressor from Bacillus pumilus (strain SAFR-032).